The primary structure comprises 530 residues: Tyrosinase (530 aa).

Residues 1 to 18 (MLLAALCCLLWSFRTSTG) form the signal peptide. Topologically, residues 19–473 (HFPRACASSK…IKPYLEQASR (455 aa)) are lumenal, melanosome. 3 N-linked (GlcNAc...) asparagine glycosylation sites follow: N86, N111, and N161. The Cu cation site is built by H180, H202, and H211. N230 and N337 each carry an N-linked (GlcNAc...) asparagine glycan. 2 residues coordinate Cu cation: H363 and H367. An N-linked (GlcNAc...) asparagine glycan is attached at N371. Residue H390 participates in Cu cation binding. The chain crosses the membrane as a helical span at residues 474-494 (IWPWLIGAAVVGCVVTAVLGG). The Cytoplasmic portion of the chain corresponds to 495 to 530 (LTSLLCRRNRKQLHEEKQPLLMEKEDYHSLLYQTHL).

The protein belongs to the tyrosinase family. In terms of assembly, forms an OPN3-dependent complex with DCT in response to blue light in melanocytes. Cu(2+) serves as cofactor. Glycosylated.

It localises to the melanosome membrane. The protein resides in the melanosome. It carries out the reaction 2 L-dopa + O2 = 2 L-dopaquinone + 2 H2O. It catalyses the reaction L-tyrosine + O2 = L-dopaquinone + H2O. The enzyme catalyses 2 5,6-dihydroxyindole-2-carboxylate + O2 = 2 indole-5,6-quinone-2-carboxylate + 2 H2O. Functionally, this is a copper-containing oxidase that functions in the formation of pigments such as melanins and other polyphenolic compounds. Catalyzes the initial and rate limiting step in the cascade of reactions leading to melanin production from tyrosine. In addition to hydroxylating tyrosine to DOPA (3,4-dihydroxyphenylalanine), also catalyzes the oxidation of DOPA to DOPA-quinone, and possibly the oxidation of DHI (5,6-dihydroxyindole) to indole-5,6 quinone. This is Tyrosinase (TYR) from Canis lupus familiaris (Dog).